A 252-amino-acid polypeptide reads, in one-letter code: Tumor necrosis factor ligand superfamily member 15 (252 aa).

Residues 1-39 lie on the Cytoplasmic side of the membrane; that stretch reads MAEELGLGFGEAVPVEMLPEGCRHRREARTGLAARSKAC. Residues 40 to 60 traverse the membrane as a helical; Signal-anchor for type II membrane protein segment; it reads LALTCCLLSFPILAGLSTLLM. Residues 61–252 are Extracellular-facing; it reads TGQLRIPGKD…DKTFFGAFLI (192 aa). Residues 96–252 enclose the THD domain; it reads PKAHLTIMRQ…DKTFFGAFLI (157 aa). N-linked (GlcNAc...) asparagine glycosylation occurs at N134. An intrachain disulfide couples C163 to C203. The N-linked (GlcNAc...) asparagine glycan is linked to N230.

The protein belongs to the tumor necrosis factor family. As to quaternary structure, homotrimer.

It localises to the membrane. Functionally, receptor for TNFRSF25 and TNFRSF6B. Mediates activation of NF-kappa-B. Inhibits vascular endothelial growth and angiogenesis (in vitro). Promotes activation of caspases and apoptosis. Promotes splenocyte alloactivation. The chain is Tumor necrosis factor ligand superfamily member 15 (Tnfsf15) from Rattus norvegicus (Rat).